The chain runs to 234 residues: FAS1 domain-containing protein AFUA_8G05360 (234 aa).

The N-terminal stretch at 1–21 is a signal peptide; that stretch reads MRRTLFVLFVVAFCFIGSVIA. An FAS1 domain is found at 83–231; the sequence is KPVVSDVLPK…GELWILNSVL (149 aa).

The protein localises to the vacuole. The polypeptide is FAS1 domain-containing protein AFUA_8G05360 (Aspergillus fumigatus (strain ATCC MYA-4609 / CBS 101355 / FGSC A1100 / Af293) (Neosartorya fumigata)).